Here is a 425-residue protein sequence, read N- to C-terminus: Serine--tRNA ligase (425 aa).

230–232 (TAE) contacts L-serine. 261-263 (RSE) provides a ligand contact to ATP. An L-serine-binding site is contributed by E284. An ATP-binding site is contributed by 348-351 (EISS). S384 contacts L-serine.

This sequence belongs to the class-II aminoacyl-tRNA synthetase family. Type-1 seryl-tRNA synthetase subfamily. In terms of assembly, homodimer. The tRNA molecule binds across the dimer.

The protein resides in the cytoplasm. It carries out the reaction tRNA(Ser) + L-serine + ATP = L-seryl-tRNA(Ser) + AMP + diphosphate + H(+). The catalysed reaction is tRNA(Sec) + L-serine + ATP = L-seryl-tRNA(Sec) + AMP + diphosphate + H(+). It participates in aminoacyl-tRNA biosynthesis; selenocysteinyl-tRNA(Sec) biosynthesis; L-seryl-tRNA(Sec) from L-serine and tRNA(Sec): step 1/1. Its function is as follows. Catalyzes the attachment of serine to tRNA(Ser). Is also able to aminoacylate tRNA(Sec) with serine, to form the misacylated tRNA L-seryl-tRNA(Sec), which will be further converted into selenocysteinyl-tRNA(Sec). This Streptococcus sanguinis (strain SK36) protein is Serine--tRNA ligase.